Here is a 357-residue protein sequence, read N- to C-terminus: tRNA pseudouridine synthase Pus10 (357 aa).

One can recognise a THUMP domain in the interval 1 to 118 (MNLCRECYGI…TFTFELQIRP (118 aa)). The active-site Nucleophile is Asp-187. The substrate site is built by Tyr-251 and Tyr-322.

Belongs to the pseudouridine synthase Pus10 family.

It catalyses the reaction uridine(54) in tRNA = pseudouridine(54) in tRNA. The catalysed reaction is uridine(55) in tRNA = pseudouridine(55) in tRNA. In terms of biological role, responsible for synthesis of pseudouridine from uracil-54 and uracil-55 in the psi GC loop of transfer RNAs. The polypeptide is tRNA pseudouridine synthase Pus10 (Archaeoglobus fulgidus (strain ATCC 49558 / DSM 4304 / JCM 9628 / NBRC 100126 / VC-16)).